We begin with the raw amino-acid sequence, 360 residues long: Phospho-N-acetylmuramoyl-pentapeptide-transferase (360 aa).

The next 10 membrane-spanning stretches (helical) occupy residues 26–46, 72–92, 94–114, 132–152, 168–188, 199–219, 236–256, 263–283, 288–308, and 338–358; these read AIVS…RMIA, PTMG…LWAY, SNPY…IGFV, WKYF…YLAG, VMPQ…VGTG, GLAI…AWAT, AGEL…FLWF, VFMG…IAVL, FLLV…ILQV, and VIVR…ATLK.

Belongs to the glycosyltransferase 4 family. MraY subfamily. Requires Mg(2+) as cofactor.

The protein localises to the cell inner membrane. The catalysed reaction is UDP-N-acetyl-alpha-D-muramoyl-L-alanyl-gamma-D-glutamyl-meso-2,6-diaminopimeloyl-D-alanyl-D-alanine + di-trans,octa-cis-undecaprenyl phosphate = di-trans,octa-cis-undecaprenyl diphospho-N-acetyl-alpha-D-muramoyl-L-alanyl-D-glutamyl-meso-2,6-diaminopimeloyl-D-alanyl-D-alanine + UMP. The protein operates within cell wall biogenesis; peptidoglycan biosynthesis. Its function is as follows. Catalyzes the initial step of the lipid cycle reactions in the biosynthesis of the cell wall peptidoglycan: transfers peptidoglycan precursor phospho-MurNAc-pentapeptide from UDP-MurNAc-pentapeptide onto the lipid carrier undecaprenyl phosphate, yielding undecaprenyl-pyrophosphoryl-MurNAc-pentapeptide, known as lipid I. The polypeptide is Phospho-N-acetylmuramoyl-pentapeptide-transferase (Citrobacter koseri (strain ATCC BAA-895 / CDC 4225-83 / SGSC4696)).